A 445-amino-acid polypeptide reads, in one-letter code: Bifunctional protein GlmU (445 aa).

The tract at residues 1–218 (MRALVLAAGK…LLEITGVNTR (218 aa)) is pyrophosphorylase. UDP-N-acetyl-alpha-D-glucosamine is bound by residues 6 to 9 (LAAG), K20, Q69, 74 to 75 (GT), 96 to 98 (YGD), G134, E147, N162, and N216. D98 is a binding site for Mg(2+). A Mg(2+)-binding site is contributed by N216. A linker region spans residues 219–239 (KTLVWLEEQLRMRKIEELLEN). The interval 240–445 (GVTILDPATT…GWVLKKRKEE (206 aa)) is N-acetyltransferase. Positions 321 and 339 each coordinate UDP-N-acetyl-alpha-D-glucosamine. The active-site Proton acceptor is the H351. Residues Y354 and N365 each contribute to the UDP-N-acetyl-alpha-D-glucosamine site. Residues A368, 374–375 (NY), S393, A411, and R428 each bind acetyl-CoA.

This sequence in the N-terminal section; belongs to the N-acetylglucosamine-1-phosphate uridyltransferase family. The protein in the C-terminal section; belongs to the transferase hexapeptide repeat family. In terms of assembly, homotrimer. Mg(2+) serves as cofactor.

It localises to the cytoplasm. It catalyses the reaction alpha-D-glucosamine 1-phosphate + acetyl-CoA = N-acetyl-alpha-D-glucosamine 1-phosphate + CoA + H(+). It carries out the reaction N-acetyl-alpha-D-glucosamine 1-phosphate + UTP + H(+) = UDP-N-acetyl-alpha-D-glucosamine + diphosphate. Its pathway is nucleotide-sugar biosynthesis; UDP-N-acetyl-alpha-D-glucosamine biosynthesis; N-acetyl-alpha-D-glucosamine 1-phosphate from alpha-D-glucosamine 6-phosphate (route II): step 2/2. The protein operates within nucleotide-sugar biosynthesis; UDP-N-acetyl-alpha-D-glucosamine biosynthesis; UDP-N-acetyl-alpha-D-glucosamine from N-acetyl-alpha-D-glucosamine 1-phosphate: step 1/1. It functions in the pathway bacterial outer membrane biogenesis; LPS lipid A biosynthesis. In terms of biological role, catalyzes the last two sequential reactions in the de novo biosynthetic pathway for UDP-N-acetylglucosamine (UDP-GlcNAc). The C-terminal domain catalyzes the transfer of acetyl group from acetyl coenzyme A to glucosamine-1-phosphate (GlcN-1-P) to produce N-acetylglucosamine-1-phosphate (GlcNAc-1-P), which is converted into UDP-GlcNAc by the transfer of uridine 5-monophosphate (from uridine 5-triphosphate), a reaction catalyzed by the N-terminal domain. The chain is Bifunctional protein GlmU from Thermotoga maritima (strain ATCC 43589 / DSM 3109 / JCM 10099 / NBRC 100826 / MSB8).